Reading from the N-terminus, the 100-residue chain is Aspartyl/glutamyl-tRNA(Asn/Gln) amidotransferase subunit C (100 aa).

It belongs to the GatC family. In terms of assembly, heterotrimer of A, B and C subunits.

The enzyme catalyses L-glutamyl-tRNA(Gln) + L-glutamine + ATP + H2O = L-glutaminyl-tRNA(Gln) + L-glutamate + ADP + phosphate + H(+). The catalysed reaction is L-aspartyl-tRNA(Asn) + L-glutamine + ATP + H2O = L-asparaginyl-tRNA(Asn) + L-glutamate + ADP + phosphate + 2 H(+). Allows the formation of correctly charged Asn-tRNA(Asn) or Gln-tRNA(Gln) through the transamidation of misacylated Asp-tRNA(Asn) or Glu-tRNA(Gln) in organisms which lack either or both of asparaginyl-tRNA or glutaminyl-tRNA synthetases. The reaction takes place in the presence of glutamine and ATP through an activated phospho-Asp-tRNA(Asn) or phospho-Glu-tRNA(Gln). The protein is Aspartyl/glutamyl-tRNA(Asn/Gln) amidotransferase subunit C of Streptococcus pyogenes serotype M49 (strain NZ131).